A 132-amino-acid polypeptide reads, in one-letter code: Large ribosomal subunit protein uL22 (132 aa).

This sequence belongs to the universal ribosomal protein uL22 family. As to quaternary structure, part of the 50S ribosomal subunit.

Functionally, this protein binds specifically to 23S rRNA; its binding is stimulated by other ribosomal proteins, e.g. L4, L17, and L20. It is important during the early stages of 50S assembly. It makes multiple contacts with different domains of the 23S rRNA in the assembled 50S subunit and ribosome. In terms of biological role, the globular domain of the protein is located near the polypeptide exit tunnel on the outside of the subunit, while an extended beta-hairpin is found that lines the wall of the exit tunnel in the center of the 70S ribosome. In Rhodospirillum centenum (strain ATCC 51521 / SW), this protein is Large ribosomal subunit protein uL22.